Reading from the N-terminus, the 370-residue chain is Apolipoprotein A-V (370 aa).

The N-terminal stretch at Met1 to Ala21 is a signal peptide. Ser59 carries the post-translational modification Phosphoserine.

It belongs to the apolipoprotein A1/A4/E family. Interacts with GPIHBP1. Interacts with SORL1; this interaction leads to APOA5 internalization and sorting either to lysosomes and degradation, or to the trans-Golgi network.

It is found in the secreted. The protein localises to the early endosome. The protein resides in the late endosome. It localises to the golgi apparatus. Its subcellular location is the trans-Golgi network. Minor apolipoprotein mainly associated with HDL and to a lesser extent with VLDL. May also be associated with chylomicrons. Important determinant of plasma triglyceride (TG) levels by both being a potent stimulator of apo-CII lipoprotein lipase (LPL) TG hydrolysis and an inhibitor of the hepatic VLDL-TG production rate (without affecting the VLDL-apoB production rate). Activates poorly lecithin:cholesterol acyltransferase (LCAT) and does not enhance efflux of cholesterol from macrophages. Binds heparin. The protein is Apolipoprotein A-V (APOA5) of Acinonyx jubatus (Cheetah).